We begin with the raw amino-acid sequence, 429 residues long: Protein ABERRANT PANICLE ORGANIZATION 1 (429 aa).

The segment covering 1–11 has biased composition (pro residues); sequence MMNPRRLPPLP. Residues 1 to 21 are disordered; the sequence is MMNPRRLPPLPSSTSSASAAD. Residues 25-71 form the F-box domain; it reads PRVWRRLPQPLVDRILACLPTPSFLRLRAACRRFYHLLFSSPFLHSH. 2 helical membrane-spanning segments follow: residues 72–92 and 112–132; these read LLLS…GHLL and VAGG…LAFL. Kelch repeat units follow at residues 229–277, 284–339, and 350–397; these read MAFA…ELGG, RVAL…AEGG, and YVVL…GAAG.

In terms of assembly, part of a putative SCF (ASK/Cullin/F-box) ubiquitin ligase complex. Interacts with FL/APO2. Expressed in apical meristems and the lateral organ primordia throughout development. Expressed in seedlings, roots, leaves, shoot apical meristem (SAM), developing panicles, and, at lower levels, in developing seeds.

The protein resides in the membrane. The protein operates within protein modification; protein ubiquitination. In terms of biological role, component of SCF(ASK-cullin-F-box) E3 ubiquitin ligase complexes, which may mediate the ubiquitination and subsequent proteasomal degradation of target proteins. Together with FL/APO2, involved in the temporal regulation of meristem identity during both vegetative and reproductive developments in an APO2-dependent manner. Promotes spikelet formation by suppressing the precocious conversion of inflorescence meristems to spikelet meristems, probably via a positive regulation of class-C floral homeotic genes, but not of class-B genes, and through the control of cell proliferation in meristems. Mediates culm development and strength/diameter enhancement at internodes. Required for the regulation of the plastochron, floral organ identity, and floral determinacy. Controls the number of primary rachis branches (PRBs). May trigger the formation of vascular bundle systems which, consequently, promote carbohydrate translocation to panicles. Involved in ozone-induced grain yield regulation. This is Protein ABERRANT PANICLE ORGANIZATION 1 from Oryza sativa subsp. japonica (Rice).